Here is a 727-residue protein sequence, read N- to C-terminus: Sodium-dependent neutral amino acid transporter SLC6A17 (727 aa).

Topologically, residues 1 to 69 are cytoplasmic; that stretch reads MPKNSKVTQR…RPAWNSKLQY (69 aa). Serine 13 and serine 20 each carry phosphoserine. A helical transmembrane segment spans residues 70 to 90; sequence ILAQIGFSVGLGNIWRFPYLC. The Extracellular portion of the chain corresponds to 91 to 95; sequence QKNGG. A helical transmembrane segment spans residues 96-116; the sequence is GAYLVPYLVLLIIIGIPLFFL. Topologically, residues 117–147 are cytoplasmic; sequence ELAVGQRIRRGSIGVWHYICPRLGGIGFSSC. A helical membrane pass occupies residues 148-168; that stretch reads IVCLFVGLYYNVIIGWSIFYF. Topologically, residues 169–222 are extracellular; the sequence is FKSFQYPLPWSECPVVRNGSVAVVEAECEKSSATTYFWYREALDISDSISESGG. The N-linked (GlcNAc...) asparagine glycan is linked to asparagine 186. A helical membrane pass occupies residues 223-243; the sequence is LNWKMTLCLLVAWSIVGMAVV. Topologically, residues 244 to 253 are cytoplasmic; sequence KGIQSSGKVM. Residues 254 to 274 traverse the membrane as a helical segment; sequence YFSSLFPYVVLACFLVRGLLL. Residues 275–300 lie on the Extracellular side of the membrane; it reads RGAVDGILHMFTPKLDKMLDPQVWRE. Residues 301–321 traverse the membrane as a helical segment; sequence AATQVFFALGLGFGGVIAFSS. Over 322 to 334 the chain is Cytoplasmic; it reads YNKQDNNCHFDAA. The helical transmembrane segment at 335-355 threads the bilayer; that stretch reads LVSFINFFTSVLATLVVFAVL. At 356–460 the chain is on the extracellular side; sequence GFKANIMNEK…HFPASPFWSV (105 aa). At tyrosine 377 the chain carries Phosphotyrosine. An N-linked (GlcNAc...) asparagine glycan is attached at asparagine 393. The helical transmembrane segment at 461-481 threads the bilayer; that stretch reads MFFLMLINLGLGSMIGTMAGI. Topologically, residues 482–490 are cytoplasmic; sequence TTPIIDTFK. Residues 491 to 511 form a helical membrane-spanning segment; that stretch reads VPKEMFTVGCCVFAFLVGLLF. Over 512-527 the chain is Extracellular; that stretch reads VQRSGNYFVTMFDDYS. A helical transmembrane segment spans residues 528–548; sequence ATLPLTLIVILENIAVAWIYG. Topologically, residues 549–573 are cytoplasmic; that stretch reads TKKFMQELTEMLGFRPYRFYFYMWK. Residues 574–594 traverse the membrane as a helical segment; the sequence is FVSPLCMAVLTTASIIQLGVT. The Extracellular portion of the chain corresponds to 595–617; sequence PPGYSAWIKEEAAERYLYFPNWA. A helical transmembrane segment spans residues 618-638; the sequence is MALLITLIVVATLPIPVVFVL. At 639 to 727 the chain is on the cytoplasmic side; sequence RHFHLLSDGS…LLASTPESEL (89 aa). Phosphoserine occurs at positions 665 and 701. Residues 680–727 are disordered; sequence VPSEAPSPMPTHRSYLGPGSTSPLETSGNPNGRYGSGYLLASTPESEL. The segment covering 698–709 has biased composition (polar residues); it reads GSTSPLETSGNP.

It belongs to the sodium:neurotransmitter symporter (SNF) (TC 2.A.22) family.

The protein resides in the cytoplasmic vesicle. It is found in the secretory vesicle. It localises to the synaptic vesicle membrane. Its subcellular location is the postsynapse. The protein localises to the presynapse. The enzyme catalyses L-proline(in) + Na(+)(in) = L-proline(out) + Na(+)(out). It catalyses the reaction L-leucine(in) + Na(+)(in) = L-leucine(out) + Na(+)(out). The catalysed reaction is glycine(in) + Na(+)(in) = glycine(out) + Na(+)(out). It carries out the reaction L-alanine(in) + Na(+)(in) = L-alanine(out) + Na(+)(out). The enzyme catalyses L-glutamine(in) + Na(+)(in) = L-glutamine(out) + Na(+)(out). Synaptic vesicle transporter with apparent selectivity for neutral amino acids. The transport is sodium-coupled but chloride-independent, likely driven by the proton electrochemical gradient generated by vacuolar H(+)-ATPase in an overall electrogenic mechanism. May contribute to the synaptic uptake of neurotransmitter precursors in a process coupled in part to vesicle exocytosis. The sequence is that of Sodium-dependent neutral amino acid transporter SLC6A17 from Homo sapiens (Human).